The sequence spans 107 residues: Phosphoribosyl-ATP pyrophosphatase (107 aa).

The protein belongs to the PRA-PH family.

Its subcellular location is the cytoplasm. It carries out the reaction 1-(5-phospho-beta-D-ribosyl)-ATP + H2O = 1-(5-phospho-beta-D-ribosyl)-5'-AMP + diphosphate + H(+). The protein operates within amino-acid biosynthesis; L-histidine biosynthesis; L-histidine from 5-phospho-alpha-D-ribose 1-diphosphate: step 2/9. The protein is Phosphoribosyl-ATP pyrophosphatase of Bacillus cytotoxicus (strain DSM 22905 / CIP 110041 / 391-98 / NVH 391-98).